The primary structure comprises 207 residues: Thymidylate kinase (207 aa).

Residue 7–14 (GCEGTGKT) coordinates ATP.

The protein belongs to the thymidylate kinase family.

It carries out the reaction dTMP + ATP = dTDP + ADP. Functionally, phosphorylation of dTMP to form dTDP in both de novo and salvage pathways of dTTP synthesis. The polypeptide is Thymidylate kinase (Onion yellows phytoplasma (strain OY-M)).